The chain runs to 505 residues: Maturase K (505 aa).

It belongs to the intron maturase 2 family. MatK subfamily.

The protein localises to the plastid. It is found in the chloroplast. Usually encoded in the trnK tRNA gene intron. Probably assists in splicing its own and other chloroplast group II introns. The chain is Maturase K from Cubanola domingensis.